A 120-amino-acid polypeptide reads, in one-letter code: MSRKIDLLDRRRARVRRALRAAANGRPRLSVFRSSKQIYVQVIDDASGRTLAAASSLDKDLRARLKTGADKAAALEVGKLVAERAKAAGVTKVIFDRSGYLYHGRVKALADAAREGGLEF.

Belongs to the universal ribosomal protein uL18 family. In terms of assembly, part of the 50S ribosomal subunit; part of the 5S rRNA/L5/L18/L25 subcomplex. Contacts the 5S and 23S rRNAs.

In terms of biological role, this is one of the proteins that bind and probably mediate the attachment of the 5S RNA into the large ribosomal subunit, where it forms part of the central protuberance. This Methylobacterium sp. (strain 4-46) protein is Large ribosomal subunit protein uL18.